The sequence spans 698 residues: DNA ligase (698 aa).

NAD(+)-binding positions include 40 to 44, 89 to 90, and Glu-123; these read DGEYD and SL. Residue Lys-125 is the N6-AMP-lysine intermediate of the active site. NAD(+)-binding residues include Arg-146, Glu-184, Lys-300, and Lys-324. Zn(2+) is bound by residues Cys-418, Cys-421, Cys-436, and Cys-442. The 79-residue stretch at 620 to 698 folds into the BRCT domain; that stretch reads AGDSPLAGKT…EAEFRAMSGG (79 aa).

It belongs to the NAD-dependent DNA ligase family. LigA subfamily. Mg(2+) serves as cofactor. It depends on Mn(2+) as a cofactor.

The catalysed reaction is NAD(+) + (deoxyribonucleotide)n-3'-hydroxyl + 5'-phospho-(deoxyribonucleotide)m = (deoxyribonucleotide)n+m + AMP + beta-nicotinamide D-nucleotide.. Its function is as follows. DNA ligase that catalyzes the formation of phosphodiester linkages between 5'-phosphoryl and 3'-hydroxyl groups in double-stranded DNA using NAD as a coenzyme and as the energy source for the reaction. It is essential for DNA replication and repair of damaged DNA. The polypeptide is DNA ligase (Rhodospirillum rubrum (strain ATCC 11170 / ATH 1.1.1 / DSM 467 / LMG 4362 / NCIMB 8255 / S1)).